We begin with the raw amino-acid sequence, 265 residues long: Zearalenone hydrolase (265 aa).

Zearalenone-binding residues include Gly35, Ser105, and Ser106. Residue Ser105 is part of the active site. The active site involves Glu129. Positions 185, 189, and 243 each coordinate zearalenone. His243 is an active-site residue.

Belongs to the AB hydrolase superfamily. Hydrolase RutD family. Homodimer.

It carries out the reaction zearalenone + H2O = hydrolyzed zearalenone + H(+). Its function is as follows. Lactonohydrolase that specifically hydrolyzes zearalenone (ZEN), an oestrogenic mycotoxin produced by numerous Fusarium specie, into a non-toxic alkylresorcinol product. This chain is Zearalenone hydrolase, found in Cladophialophora bantiana (strain ATCC 10958 / CDC1940 / 8579 / CBS 173.52) (Xylohypha bantiana).